We begin with the raw amino-acid sequence, 158 residues long: NAD(P)H-quinone oxidoreductase subunit J, chloroplastic (158 aa).

Belongs to the complex I 30 kDa subunit family. NDH is composed of at least 16 different subunits, 5 of which are encoded in the nucleus.

Its subcellular location is the plastid. It is found in the chloroplast thylakoid membrane. The catalysed reaction is a plastoquinone + NADH + (n+1) H(+)(in) = a plastoquinol + NAD(+) + n H(+)(out). It catalyses the reaction a plastoquinone + NADPH + (n+1) H(+)(in) = a plastoquinol + NADP(+) + n H(+)(out). Its function is as follows. NDH shuttles electrons from NAD(P)H:plastoquinone, via FMN and iron-sulfur (Fe-S) centers, to quinones in the photosynthetic chain and possibly in a chloroplast respiratory chain. The immediate electron acceptor for the enzyme in this species is believed to be plastoquinone. Couples the redox reaction to proton translocation, and thus conserves the redox energy in a proton gradient. The protein is NAD(P)H-quinone oxidoreductase subunit J, chloroplastic of Gossypium barbadense (Sea Island cotton).